A 168-amino-acid polypeptide reads, in one-letter code: Ribosome maturation factor RimM (168 aa).

The PRC barrel domain occupies 96–168 (EGDYYWTDLI…IIVVEWDADF (73 aa)).

It belongs to the RimM family. Binds ribosomal protein uS19.

It localises to the cytoplasm. In terms of biological role, an accessory protein needed during the final step in the assembly of 30S ribosomal subunit, possibly for assembly of the head region. Essential for efficient processing of 16S rRNA. May be needed both before and after RbfA during the maturation of 16S rRNA. It has affinity for free ribosomal 30S subunits but not for 70S ribosomes. In Coxiella burnetii (strain RSA 331 / Henzerling II), this protein is Ribosome maturation factor RimM.